Reading from the N-terminus, the 795-residue chain is Delta-1-pyrroline-5-carboxylate synthase (795 aa).

The tract at residues 1-361 (MLRHMHRSGV…FFSEVKPAGP (361 aa)) is glutamate 5-kinase. The substrate site is built by serine 117, aspartate 223, and asparagine 246. ATP is bound by residues 266 to 267 (SD) and 305 to 311 (LGGMEAK). An N6-succinyllysine mark is found at lysine 311, lysine 347, and lysine 550. The gamma-glutamyl phosphate reductase stretch occupies residues 362–795 (TVEQQGEMAR…NLPVPQRNFS (434 aa)).

This sequence in the N-terminal section; belongs to the glutamate 5-kinase family. In the C-terminal section; belongs to the gamma-glutamyl phosphate reductase family. Can form homodimers/multimers.

It is found in the mitochondrion matrix. The enzyme catalyses L-glutamate + ATP = L-glutamyl 5-phosphate + ADP. The catalysed reaction is L-glutamate 5-semialdehyde + phosphate + NADP(+) = L-glutamyl 5-phosphate + NADPH + H(+). The protein operates within amino-acid biosynthesis; L-proline biosynthesis; L-glutamate 5-semialdehyde from L-glutamate: step 1/2. It participates in amino-acid biosynthesis; L-proline biosynthesis; L-glutamate 5-semialdehyde from L-glutamate: step 2/2. Its activity is regulated as follows. Isoform Short: Inhibited by L-ornithine with a Ki of approximately 0.25 mm. Isoform Long: Insensitive to ornithine inhibition. Thus, the two amino acid insert in the long isoform abolishes feedback inhibition of P5CS activity by L-ornithine. Its function is as follows. Bifunctional enzyme that converts glutamate to glutamate 5-semialdehyde, an intermediate in the biosynthesis of proline, ornithine and arginine. In Mus musculus (Mouse), this protein is Delta-1-pyrroline-5-carboxylate synthase (Aldh18a1).